Here is a 303-residue protein sequence, read N- to C-terminus: NAD(+)--arginine ADP-ribosyltransferase Lart1 (303 aa).

Its subcellular location is the secreted. The enzyme catalyses L-arginyl-[protein] + NAD(+) = N(omega)-(ADP-D-ribosyl)-L-arginyl-[protein] + nicotinamide + H(+). Functionally, ADP-ribosyltransferase that targets a specific class of NAD(+)-dependent glutamate dehydrogenase (GDH) enzymes found in fungi and protists, including many natural hosts of Legionella. Acts by targeting a conserved arginine residue in the NAD(+)-binding pocket of GDH, thereby blocking oxidative deamination of glutamate. Lart1 may target amoeba GDH to prevent a conserved stress response. In vitro, acts on Glud2 from the amoeba Dictyostelium discoideum (DdGluD2) and yeast Gdh2p but does not act on human or Legionella GDH homologs. The sequence is that of NAD(+)--arginine ADP-ribosyltransferase Lart1 from Legionella pneumophila subsp. pneumophila (strain Philadelphia 1 / ATCC 33152 / DSM 7513).